We begin with the raw amino-acid sequence, 498 residues long: Lysine--tRNA ligase (498 aa).

Residues E408 and E415 each contribute to the Mg(2+) site.

This sequence belongs to the class-II aminoacyl-tRNA synthetase family. In terms of assembly, homodimer. The cofactor is Mg(2+).

It is found in the cytoplasm. It carries out the reaction tRNA(Lys) + L-lysine + ATP = L-lysyl-tRNA(Lys) + AMP + diphosphate. The polypeptide is Lysine--tRNA ligase (Listeria welshimeri serovar 6b (strain ATCC 35897 / DSM 20650 / CCUG 15529 / CIP 8149 / NCTC 11857 / SLCC 5334 / V8)).